Reading from the N-terminus, the 609-residue chain is MRAGHETETSIMRPQYPGDDIRPTSKKELAGWYSYGWAAEVFTVCAMGSFLPITLEQMARDRGVLFSDKVTPCSATLNGPSRMSIQARWTLSSRYDAGRPTVANQCVVYIFGVEINTASFAMYTFSVSVFIQAILIISMSGAADHGSHRKLLLMAFAVIGSVSTMLFLGVVPKIYMVGAVIAIIANTCFGASFVLLNSFLPLLVRHHPSVLRSAREPRPALDDSRAQEGHSDTTNGIEHGIESNVTSPLLHARQGNGENAEADMHPATHITVSQELKVSTRISSFGIGIGYIGAIILQIVCILVVIATNQTTYSLRLVLFLIGLWWFIFSIPAALWLRSRPGPPLATTHHGKHTRSWIGYMAYSWKSLYRTAVRTRHLKDILLFLAAWLLLSDGIATVSGTAVLFAKTQLNMQPAALGLINVIAMVAGVLGAFSWGSFSRVFNLSASQTIIACILLFELVPLYGLLGFIPAIKSLGFLGLQQPWEMFPLGIVYGLVMGGLSSYCRSFFGELIPPGNEAAFYALYAITDKGSSIFGPTIVGIITDRYGEIRPAFVFLAILIFLPLPLMLLVDVERGKRDALALAAELQPSGAQTYGTLPTNEDRAPPSEL.

Transmembrane regions (helical) follow at residues 35–55 (YGWA…PITL), 117–137 (TASF…ILII), 151–171 (LLLM…LGVV), and 176–196 (MVGA…FVLL). Residues 214-231 (AREPRPALDDSRAQEGHS) show a composition bias toward basic and acidic residues. The segment at 214 to 240 (AREPRPALDDSRAQEGHSDTTNGIEHG) is disordered. Asn244 carries an N-linked (GlcNAc...) asparagine glycan. A helical transmembrane segment spans residues 287-307 (IGIGYIGAIILQIVCILVVIA). N-linked (GlcNAc...) asparagine glycosylation is present at Asn309. 3 consecutive transmembrane segments (helical) span residues 317–337 (LVLF…ALWL), 381–401 (ILLF…VSGT), and 415–435 (AALG…AFSW). The N-linked (GlcNAc...) asparagine glycan is linked to Asn443. 4 helical membrane passes run 450–470 (IIAC…GFIP), 477–497 (FLGL…GLVM), 522–542 (ALYA…VGII), and 552–572 (AFVF…LVDV).

The protein belongs to the ATG22 family.

Its subcellular location is the vacuole membrane. In terms of biological role, vacuolar effluxer which mediate the efflux of amino acids resulting from autophagic degradation. The release of autophagic amino acids allows the maintenance of protein synthesis and viability during nitrogen starvation. In Aspergillus fumigatus (strain ATCC MYA-4609 / CBS 101355 / FGSC A1100 / Af293) (Neosartorya fumigata), this protein is Autophagy-related protein 22-1 (atg22-1).